We begin with the raw amino-acid sequence, 361 residues long: Peptide chain release factor 1 (361 aa).

The residue at position 235 (Gln235) is an N5-methylglutamine. The interval 286–305 is disordered; it reads IDSARSAERKQKVGSGDRSE.

It belongs to the prokaryotic/mitochondrial release factor family. In terms of processing, methylated by PrmC. Methylation increases the termination efficiency of RF1.

It is found in the cytoplasm. Functionally, peptide chain release factor 1 directs the termination of translation in response to the peptide chain termination codons UAG and UAA. The protein is Peptide chain release factor 1 of Rhodopseudomonas palustris (strain HaA2).